The chain runs to 115 residues: MDMVDRTSRRGYRDWFVQRITALLSGIYAVFVIVFLLVHHPISYPQWHALFSHLIMKIFTLIVIFSILWHAWIGMWTIFTDYVKNKPIRLALETLVCLLLVGYFVWAIEFLWIAR.

Over 1–14 (MDMVDRTSRRGYRD) the chain is Cytoplasmic. Residues 15-35 (WFVQRITALLSGIYAVFVIVF) form a helical membrane-spanning segment. The Periplasmic portion of the chain corresponds to 36 to 57 (LLVHHPISYPQWHALFSHLIMK). A helical membrane pass occupies residues 58–79 (IFTLIVIFSILWHAWIGMWTIF). Residue His70 participates in heme binding. Residues 80-89 (TDYVKNKPIR) are Cytoplasmic-facing. Tyr82 contributes to the a ubiquinone binding site. A helical membrane pass occupies residues 90 to 113 (LALETLVCLLLVGYFVWAIEFLWI).

Part of an enzyme complex containing four subunits: a flavoprotein, an iron-sulfur protein, plus two membrane-anchoring proteins, SdhC and SdhD. Requires heme as cofactor.

The protein resides in the cell inner membrane. The protein operates within carbohydrate metabolism; tricarboxylic acid cycle. Membrane-anchoring subunit of succinate dehydrogenase (SDH). The polypeptide is Succinate dehydrogenase hydrophobic membrane anchor subunit (sdhD) (Coxiella burnetii (strain RSA 493 / Nine Mile phase I)).